Reading from the N-terminus, the 213-residue chain is Ribosomal RNA small subunit methyltransferase G (213 aa).

S-adenosyl-L-methionine is bound by residues G75, F80, 128 to 129, and R144; that span reads IE.

It belongs to the methyltransferase superfamily. RNA methyltransferase RsmG family.

The protein resides in the cytoplasm. It carries out the reaction guanosine(527) in 16S rRNA + S-adenosyl-L-methionine = N(7)-methylguanosine(527) in 16S rRNA + S-adenosyl-L-homocysteine. In terms of biological role, specifically methylates the N7 position of guanine in position 527 of 16S rRNA. In Brucella abortus (strain S19), this protein is Ribosomal RNA small subunit methyltransferase G.